A 62-amino-acid polypeptide reads, in one-letter code: uncharacterized protein (62 aa).

This is an uncharacterized protein from Methanocaldococcus jannaschii (strain ATCC 43067 / DSM 2661 / JAL-1 / JCM 10045 / NBRC 100440) (Methanococcus jannaschii).